The primary structure comprises 758 residues: Ferrichrome receptor FcuA (758 aa).

A signal peptide spans 1–36 (MNQTISSRAPQKRLAPRLLCVMIGAALGTLSASSWA). The TonB box motif lies at 66–73 (DTITVVGA). Positions 106-216 (DARNVPFNVI…VGGMINLEPK (111 aa)) constitute a TBDR plug domain. The 538-residue stretch at 221–758 (TPLTRVTVDY…ALKLSVSMDF (538 aa)) folds into the TBDR beta-barrel domain. The TonB C-terminal box signature appears at 741 to 758 (YIYQGDPRALKLSVSMDF).

This sequence belongs to the TonB-dependent receptor family.

The protein resides in the cell outer membrane. Receptor for the hydroxamate siderophore, ferrichrome. Binds also to most other ferrichrome derivatives except enantio ferrichrome and ferric rhodotorulate. This Yersinia enterocolitica protein is Ferrichrome receptor FcuA (fcuA).